Consider the following 319-residue polypeptide: G-protein coupled receptor 171 (319 aa).

At 1 to 21 (MTNSSTFCPVYRDLEPFTYFF) the chain is on the extracellular side. N-linked (GlcNAc...) asparagine glycosylation occurs at Asn3. A helical membrane pass occupies residues 22-42 (YLVFLIGIIGSCFATWAFIQK). Residues 43–48 (NTNHRC) are Cytoplasmic-facing. A helical transmembrane segment spans residues 49–69 (VSIYLINLLTADFLLTLALPV). Over 70–89 (KITVDLGVAPWKLRIFHCQV) the chain is Extracellular. The helical transmembrane segment at 90–110 (TACLIYINMYLSIIFLAFVSI) threads the bilayer. Residues 111–132 (DRCLQLTYSCKIYRIQEPGFAK) lie on the Cytoplasmic side of the membrane. Residues 133 to 153 (MISAVVWLMVLLIMVPNMIIP) traverse the membrane as a helical segment. Topologically, residues 154-181 (IKDIKEKPNVGCMEFKSEFGRNWHLLTN) are extracellular. Residues 182-202 (FISIAIFFNFSAIILISNCLV) form a helical membrane-spanning segment. Topologically, residues 203–224 (IRQLYRNKDNENYPNVKRALIS) are cytoplasmic. Residues 225–245 (ILLVTTGYIICFVPYHIVRIP) form a helical membrane-spanning segment. The Extracellular segment spans residues 246 to 268 (YTLSQTEVISDCSTRISLFKAKE). Residues 269–289 (ATLLLAVSNLCFDPILYYHLS) traverse the membrane as a helical segment. Topologically, residues 290–319 (KAFRLKITETFASHKESKAQKEKPRSENNA) are cytoplasmic.

The protein belongs to the G-protein coupled receptor 1 family.

Its subcellular location is the cell membrane. Its function is as follows. G-protein coupled receptor for Big LEN, a 16-amino acid neuropeptide produced from the precursor protein, proSAAS (encoded by PCSK1N). Acts through a G(i)-alpha-mediated pathway in response to bigLEN. Big LEN-GPR171 system plays an important role in regulating feeding and metabolism. Also plays a role in modulating fear and anxiety-like behaviors in the basolateral amygdala. Big LEN-GPR171 modulates the mu-type opioid receptor signaling and antinociception. Acts as a negative regulator T cell function. The chain is G-protein coupled receptor 171 (GPR171) from Bos taurus (Bovine).